A 182-amino-acid polypeptide reads, in one-letter code: Ribulose bisphosphate carboxylase small subunit, chloroplastic (182 aa).

A chloroplast-targeting transit peptide spans 1 to 58 (MASSMISSATIATVNCSSPAQANMVAPFTGLKSASAFPVTRKANNDITSLASNGGRVQ).

This sequence belongs to the RuBisCO small chain family. In terms of assembly, heterohexadecamer of 8 large and 8 small subunits.

It is found in the plastid. Its subcellular location is the chloroplast. Functionally, ruBisCO catalyzes two reactions: the carboxylation of D-ribulose 1,5-bisphosphate, the primary event in carbon dioxide fixation, as well as the oxidative fragmentation of the pentose substrate. Both reactions occur simultaneously and in competition at the same active site. Although the small subunit is not catalytic it is essential for maximal activity. This Gossypium hirsutum (Upland cotton) protein is Ribulose bisphosphate carboxylase small subunit, chloroplastic.